A 413-amino-acid polypeptide reads, in one-letter code: Serine hydroxymethyltransferase (413 aa).

(6S)-5,6,7,8-tetrahydrofolate contacts are provided by residues leucine 117 and 121–123 (GHL). An N6-(pyridoxal phosphate)lysine modification is found at lysine 226. 349 to 351 (SPF) contacts (6S)-5,6,7,8-tetrahydrofolate.

The protein belongs to the SHMT family. Homodimer. Pyridoxal 5'-phosphate serves as cofactor.

The protein localises to the cytoplasm. The enzyme catalyses (6R)-5,10-methylene-5,6,7,8-tetrahydrofolate + glycine + H2O = (6S)-5,6,7,8-tetrahydrofolate + L-serine. It participates in one-carbon metabolism; tetrahydrofolate interconversion. The protein operates within amino-acid biosynthesis; glycine biosynthesis; glycine from L-serine: step 1/1. Its function is as follows. Catalyzes the reversible interconversion of serine and glycine with tetrahydrofolate (THF) serving as the one-carbon carrier. This reaction serves as the major source of one-carbon groups required for the biosynthesis of purines, thymidylate, methionine, and other important biomolecules. Also exhibits THF-independent aldolase activity toward beta-hydroxyamino acids, producing glycine and aldehydes, via a retro-aldol mechanism. This is Serine hydroxymethyltransferase from Listeria innocua serovar 6a (strain ATCC BAA-680 / CLIP 11262).